Here is a 610-residue protein sequence, read N- to C-terminus: uncharacterized protein (610 aa).

Over residues 1–28 (MDSPSTSESPLKKNTIQDFGESNMTESP) the composition is skewed to polar residues. The segment at 1–36 (MDSPSTSESPLKKNTIQDFGESNMTESPQSKEEIDE) is disordered. Residues 41-82 (CSVCKNEIIDTTSLSDCCHEFCYDCIVGWLTKGSGPFCPMCK) form an RING-type zinc finger. Disordered regions lie at residues 390 to 411 (YRGQPQAPLRLGPNATNPFRPA) and 431 to 515 (TSSA…SADR). The segment covering 432–447 (SSAGAGSARSRGSDSV) has biased composition (low complexity). Composition is skewed to acidic residues over residues 448–470 (VEIDDDDDNDGVDVDDDDREDSD) and 478–487 (SEEDSDEEIQ).

This is an uncharacterized protein from Caenorhabditis elegans.